A 270-amino-acid chain; its full sequence is Molybdenum-pterin-binding protein MopB (270 aa).

2 consecutive Mop domains span residues 131-197 (RTSA…LLAG) and 203-269 (RLSV…ILAL).

The protein belongs to the ModE family.

This Rhodobacter capsulatus (Rhodopseudomonas capsulata) protein is Molybdenum-pterin-binding protein MopB (mopB).